The chain runs to 568 residues: Pyruvate carboxylase subunit B (568 aa).

Residues 4–264 (IKVVETAFRD…DTGLDLEILK (261 aa)) enclose the Pyruvate carboxyltransferase domain. Residues 12-16 (RDAHQ) and arginine 83 contribute to the substrate site. Aspartate 13 contributes to the a divalent metal cation binding site. 3 residues coordinate a divalent metal cation: lysine 174, histidine 203, and histidine 205. Lysine 174 is subject to N6-carboxylysine. Threonine 339 lines the substrate pocket. The region spanning 493–568 (PEPVDVEGAV…ETGDIIMVIK (76 aa)) is the Biotinyl-binding domain. Residue lysine 534 is modified to N6-biotinyllysine.

In terms of assembly, heterooctamer of four A and four B subunits. Requires Mg(2+) as cofactor. The cofactor is Mn(2+). Co(2+) is required as a cofactor.

It catalyses the reaction hydrogencarbonate + pyruvate + ATP = oxaloacetate + ADP + phosphate + H(+). Inhibited by ADP and alpha-ketoglutarate. In terms of biological role, pyruvate carboxylase catalyzes a 2-step reaction, involving the ATP-dependent carboxylation of the covalently attached biotin in the first step and the transfer of the carboxyl group to pyruvate in the second. This Methanothermobacter thermautotrophicus (strain ATCC 29096 / DSM 1053 / JCM 10044 / NBRC 100330 / Delta H) (Methanobacterium thermoautotrophicum) protein is Pyruvate carboxylase subunit B (pycB).